The chain runs to 107 residues: Class I hydrophobin hgfI (107 aa).

An N-terminal signal peptide occupies residues 1–24 (MFSKLAIFATAAFAVLAAATPVRR). Cystine bridges form between C27/C88, C34/C82, C35/C68, and C89/C102.

The protein belongs to the fungal hydrophobin family. As to quaternary structure, self-assembles to form functional amyloid fibrils called rodlets with a length range 100-150 nm. Self-assembly into fibrillar rodlets occurs spontaneously at hydrophobic:hydrophilic interfaces and the rodlets further associate laterally to form amphipathic monolayers. In terms of tissue distribution, only weekly expressed in hyphae cultured in liquid medium.

It localises to the secreted. The protein resides in the cell wall. Its function is as follows. Aerial growth, conidiation, and dispersal of filamentous fungi in the environment rely upon a capability of their secreting small amphipathic proteins called hydrophobins (HPBs) with low sequence identity. Class I can self-assemble into an outermost layer of rodlet bundles on aerial cell surfaces, conferring cellular hydrophobicity that supports fungal growth, development and dispersal; whereas Class II form highly ordered films at water-air interfaces through intermolecular interactions but contribute nothing to the rodlet structure. HgfI is a class I hydrophobin that is involved in cell surface hydrophobicity and lowers the surface tension of water and change the nature of the surfaces to which it adsorbs. The sequence is that of Class I hydrophobin hgfI from Grifola frondosa (Maitake).